The chain runs to 356 residues: UDP-N-acetylglucosamine--N-acetylmuramyl-(pentapeptide) pyrophosphoryl-undecaprenol N-acetylglucosamine transferase (356 aa).

Residues serine 195 and glutamine 287 each coordinate UDP-N-acetyl-alpha-D-glucosamine.

It belongs to the glycosyltransferase 28 family. MurG subfamily.

It is found in the cell membrane. It catalyses the reaction Mur2Ac(oyl-L-Ala-gamma-D-Glu-L-Lys-D-Ala-D-Ala)-di-trans,octa-cis-undecaprenyl diphosphate + UDP-N-acetyl-alpha-D-glucosamine = beta-D-GlcNAc-(1-&gt;4)-Mur2Ac(oyl-L-Ala-gamma-D-Glu-L-Lys-D-Ala-D-Ala)-di-trans,octa-cis-undecaprenyl diphosphate + UDP + H(+). It participates in cell wall biogenesis; peptidoglycan biosynthesis. Functionally, cell wall formation. Catalyzes the transfer of a GlcNAc subunit on undecaprenyl-pyrophosphoryl-MurNAc-pentapeptide (lipid intermediate I) to form undecaprenyl-pyrophosphoryl-MurNAc-(pentapeptide)GlcNAc (lipid intermediate II). The polypeptide is UDP-N-acetylglucosamine--N-acetylmuramyl-(pentapeptide) pyrophosphoryl-undecaprenol N-acetylglucosamine transferase (Streptococcus sanguinis (strain SK36)).